The sequence spans 236 residues: uncharacterized protein (236 aa).

It localises to the plastid. Its subcellular location is the chloroplast. This is an uncharacterized protein from Chlorella vulgaris (Green alga).